The sequence spans 1010 residues: Regulator of telomere elongation helicase 1 homolog (1010 aa).

Residues 7 to 333 (NGITVNFPFE…KEMLLQLEKT (327 aa)) form the Helicase ATP-binding domain. 42–49 (SPTGTGKT) provides a ligand contact to ATP. [4Fe-4S] cluster contacts are provided by Cys157, Cys175, Cys184, and Cys220. The short motif at 263 to 266 (DEAH) is the DEAH box element. A disordered region spans residues 912–931 (TSDDEDPGRTGDDPTRQAPE). The segment covering 918-931 (PGRTGDDPTRQAPE) has biased composition (basic and acidic residues).

This sequence belongs to the helicase family. RAD3/XPD subfamily.

Its subcellular location is the nucleus. The enzyme catalyses ATP + H2O = ADP + phosphate + H(+). A probable ATP-dependent DNA helicase implicated in DNA repair and the maintenance of genomic stability. Acts as an anti-recombinase to counteract toxic recombination and limit crossover during meiosis. Regulates meiotic recombination and crossover homeostasis by physically dissociating strand invasion events and thereby promotes noncrossover repair by meiotic synthesis dependent strand annealing (SDSA) as well as disassembly of D loop recombination intermediates. This Aedes aegypti (Yellowfever mosquito) protein is Regulator of telomere elongation helicase 1 homolog.